A 130-amino-acid polypeptide reads, in one-letter code: Prefoldin subunit alpha (130 aa).

The protein belongs to the prefoldin subunit alpha family. In terms of assembly, heterohexamer of two alpha and four beta subunits.

The protein resides in the cytoplasm. In terms of biological role, molecular chaperone capable of stabilizing a range of proteins. Seems to fulfill an ATP-independent, HSP70-like function in archaeal de novo protein folding. This chain is Prefoldin subunit alpha (pfdA), found in Thermoplasma acidophilum (strain ATCC 25905 / DSM 1728 / JCM 9062 / NBRC 15155 / AMRC-C165).